The primary structure comprises 484 residues: Glutamate--tRNA ligase (484 aa).

The 'HIGH' region motif lies at 11 to 21 (PSPTGLLHIGN). The 'KMSKS' region signature appears at 255-259 (KLSKR). Lys258 serves as a coordination point for ATP.

Belongs to the class-I aminoacyl-tRNA synthetase family. Glutamate--tRNA ligase type 1 subfamily. Monomer.

Its subcellular location is the cytoplasm. It carries out the reaction tRNA(Glu) + L-glutamate + ATP = L-glutamyl-tRNA(Glu) + AMP + diphosphate. Functionally, catalyzes the attachment of glutamate to tRNA(Glu) in a two-step reaction: glutamate is first activated by ATP to form Glu-AMP and then transferred to the acceptor end of tRNA(Glu). The protein is Glutamate--tRNA ligase of Streptococcus thermophilus (strain CNRZ 1066).